Here is a 228-residue protein sequence, read N- to C-terminus: Caspase recruitment domain-containing protein 19 (228 aa).

A disulfide bridge connects residues C7 and C77. Positions 8–99 constitute a CARD domain; sequence DRLVQDTPFL…PLHSRLPSRH (92 aa). The residue at position 113 (V113) is a Phosphoserine.

In terms of assembly, associates with BCL10 by CARD-CARD interaction. Expressed in ovary, testis, placenta, skeletal muscle, kidney, lung, heart and liver (at protein level). Expressed in thymus and brain.

Its subcellular location is the nucleus. It is found in the endoplasmic reticulum membrane. It localises to the mitochondrion membrane. In terms of biological role, plays a role in inhibiting the effects of BCL10-induced activation of NF-kappa-B. May inhibit the phosphorylation of BCL10 in a CARD-dependent manner. The chain is Caspase recruitment domain-containing protein 19 (CARD19) from Homo sapiens (Human).